The chain runs to 316 residues: Ornithine carbamoyltransferase (316 aa).

Carbamoyl phosphate is bound by residues 57 to 60 (STRT), glutamine 84, arginine 108, and 135 to 138 (HPCQ). Residues asparagine 166, aspartate 230, and 234-235 (SM) each bind L-ornithine. Residues 269–270 (CL) and arginine 297 contribute to the carbamoyl phosphate site.

It belongs to the aspartate/ornithine carbamoyltransferase superfamily. OTCase family.

The protein resides in the cytoplasm. The catalysed reaction is carbamoyl phosphate + L-ornithine = L-citrulline + phosphate + H(+). It participates in amino-acid biosynthesis; L-arginine biosynthesis; L-arginine from L-ornithine and carbamoyl phosphate: step 1/3. Functionally, reversibly catalyzes the transfer of the carbamoyl group from carbamoyl phosphate (CP) to the N(epsilon) atom of ornithine (ORN) to produce L-citrulline. The chain is Ornithine carbamoyltransferase from Bacillus thuringiensis subsp. konkukian (strain 97-27).